Here is a 51-residue protein sequence, read N- to C-terminus: Protein alpha-3 (51 aa).

This chain is Protein alpha-3 (alpha), found in Bos taurus (Bovine).